Reading from the N-terminus, the 1153-residue chain is Error-prone DNA polymerase (1153 aa).

The interval 1107–1153 (DELIAPSASTEREAPLNDDRRDHPDLPAQQIRHPRNVRILPPSRDFH) is disordered. Positions 1116–1131 (TEREAPLNDDRRDHPD) are enriched in basic and acidic residues.

It belongs to the DNA polymerase type-C family. DnaE2 subfamily.

It is found in the cytoplasm. It carries out the reaction DNA(n) + a 2'-deoxyribonucleoside 5'-triphosphate = DNA(n+1) + diphosphate. In terms of biological role, DNA polymerase involved in damage-induced mutagenesis and translesion synthesis (TLS). It is not the major replicative DNA polymerase. The protein is Error-prone DNA polymerase of Rhodopseudomonas palustris (strain BisA53).